We begin with the raw amino-acid sequence, 349 residues long: Homeobox protein engrailed (349 aa).

Disordered stretches follow at residues 26–53, 146–210, 228–252, and 327–349; these read DGPSPLSASTPGPSPDRPGSATMSSPLS, GKET…PLPP, PSSGRSPRCRRMKKDKAITPDEKRP, and STIPTEDDEDDEISSTSLQARIE. Basic and acidic residues-rich tracts occupy residues 173–188 and 242–252; these read QMKKKEEIKEEARTES and DKAITPDEKRP. A DNA-binding region (homeobox) is located at residues 249–308; it reads EKRPRTAFTAEQLSRLKHEFNENRYLTERRRQDLARELGLHENQIKIWFQNNRAKLKKSS.

Belongs to the engrailed homeobox family.

Its subcellular location is the nucleus. The chain is Homeobox protein engrailed from Artemia franciscana (Brine shrimp).